We begin with the raw amino-acid sequence, 130 residues long: Small ribosomal subunit protein uS9 (130 aa).

This sequence belongs to the universal ribosomal protein uS9 family.

This chain is Small ribosomal subunit protein uS9, found in Geotalea daltonii (strain DSM 22248 / JCM 15807 / FRC-32) (Geobacter daltonii).